Reading from the N-terminus, the 23-residue chain is Defensin D4 (23 aa).

This sequence belongs to the DEFL family. Group IV subfamily. In terms of tissue distribution, distributed in the epidermal cell layer of leaves and in the subepidermal layer region of stems. Not in roots.

It is found in the secreted. It localises to the cell wall. In terms of biological role, antimicrobial peptide. Active against Fusarium spp., Gram-positive and Gram-negative bacterial pathogens. The protein is Defensin D4 of Spinacia oleracea (Spinach).